Reading from the N-terminus, the 362-residue chain is tRNA-specific 2-thiouridylase MnmA 3 (362 aa).

Residues G11–S18 and M37 contribute to the ATP site. C91 (nucleophile) is an active-site residue. C91 and C188 are joined by a disulfide. G115 lines the ATP pocket. The interval K137–Q139 is interaction with tRNA. C188 serves as the catalytic Cysteine persulfide intermediate. Residues R296 to Y297 are interaction with tRNA.

Belongs to the MnmA/TRMU family.

It localises to the cytoplasm. It catalyses the reaction S-sulfanyl-L-cysteinyl-[protein] + uridine(34) in tRNA + AH2 + ATP = 2-thiouridine(34) in tRNA + L-cysteinyl-[protein] + A + AMP + diphosphate + H(+). Functionally, catalyzes the 2-thiolation of uridine at the wobble position (U34) of tRNA, leading to the formation of s(2)U34. The chain is tRNA-specific 2-thiouridylase MnmA 3 from Bacteroides fragilis (strain YCH46).